We begin with the raw amino-acid sequence, 300 residues long: Tyrosine recombinase XerC (300 aa).

Residues 1-86 (MESVLDAFDQ…AVKTFTAWAV (86 aa)) form the Core-binding (CB) domain. The Tyr recombinase domain maps to 107-294 (TLPAVLRQDQ…TVARLRAVHD (188 aa)). Catalysis depends on residues R151, K175, H246, R249, and H272. Y281 functions as the O-(3'-phospho-DNA)-tyrosine intermediate in the catalytic mechanism.

This sequence belongs to the 'phage' integrase family. XerC subfamily. As to quaternary structure, forms a cyclic heterotetrameric complex composed of two molecules of XerC and two molecules of XerD.

The protein resides in the cytoplasm. Site-specific tyrosine recombinase, which acts by catalyzing the cutting and rejoining of the recombining DNA molecules. The XerC-XerD complex is essential to convert dimers of the bacterial chromosome into monomers to permit their segregation at cell division. It also contributes to the segregational stability of plasmids. The chain is Tyrosine recombinase XerC from Mycobacterium sp. (strain JLS).